The primary structure comprises 228 residues: MPGAGDGGKAPARWLGTGLLGLFLLPVTLSLEVSVGKATDIYAVNGTEILLPCTFSSCFGFEDLHFRWTYNSSDAFKILIEGTVKNEKSDPKVTLKDDDRITLVGSTKEKMNNISIVLRDLEFSDTGKYTCHVKNPKENNLQHHATIFLQVVDRLEEVDNTVTLIILAVVGGVIGLLILILLIKKLIIFILKKTREKKKECLVSSSGNDNTENGLPGSKAEEKPPSKV.

The first 30 residues, 1-30 (MPGAGDGGKAPARWLGTGLLGLFLLPVTLS), serve as a signal peptide directing secretion. Residues 31–148 (LEVSVGKATD…NNLQHHATIF (118 aa)) form the Ig-like C2-type domain. Residues 31–162 (LEVSVGKATD…DRLEEVDNTV (132 aa)) are Extracellular-facing. N-linked (GlcNAc...) asparagine glycans are attached at residues asparagine 45, asparagine 71, and asparagine 113. Cysteine 53 and cysteine 131 are oxidised to a cystine. The helical transmembrane segment at 163–183 (TLIILAVVGGVIGLLILILLI) threads the bilayer. Topologically, residues 184–228 (KKLIIFILKKTREKKKECLVSSSGNDNTENGLPGSKAEEKPPSKV) are cytoplasmic. The tract at residues 200-228 (ECLVSSSGNDNTENGLPGSKAEEKPPSKV) is disordered. Residues 203–213 (VSSSGNDNTEN) show a composition bias toward polar residues. Residues 219 to 228 (KAEEKPPSKV) are compositionally biased toward basic and acidic residues.

Belongs to the sodium channel auxiliary subunit SCN4B (TC 8.A.17) family. In terms of assembly, a voltage-gated sodium (Nav) channel consists of an ion-conducting pore-forming alpha subunit functional on its own that is regulated by one or more beta subunits. The beta subunit SCN4B is disulfide-linked to the pore-forming alpha subunit. Interacts with SCN1A; regulatory subunit of SCN1A/Nav1.1. Interacts with SCN2A; regulatory subunit of SCN2A/Nav1.2. Contains an interchain disulfide bond with SCN2A. In terms of processing, N-glycosylated. In terms of tissue distribution, expressed at a high level in dorsal root ganglia, at a lower level in brain, spinal cord, skeletal muscle and heart. Expressed in the atrium.

The protein resides in the cell membrane. In terms of biological role, regulatory subunit of multiple voltage-gated sodium (Nav) channels directly mediating the depolarization of excitable membranes. Navs, also called VGSCs (voltage-gated sodium channels) or VDSCs (voltage-dependent sodium channels), operate by switching between closed and open conformations depending on the voltage difference across the membrane. In the open conformation they allow Na(+) ions to selectively pass through the pore, along their electrochemical gradient. The influx of Na+ ions provokes membrane depolarization, initiating the propagation of electrical signals throughout cells and tissues. The accessory beta subunits participate in localization and functional modulation of the Nav channels. Modulates the activity of SCN1A/Nav1.1. Modulates the activity of SCN2A/Nav1.2. This Homo sapiens (Human) protein is Sodium channel regulatory subunit beta-4.